The chain runs to 296 residues: Giardin subunit alpha-4 (296 aa).

Annexin repeat units lie at residues Ala3–Trp72, Ser74–Lys146, Lys153–Trp223, and Asp226–Arg294.

This sequence belongs to the annexin family. Giardin subunit alpha subfamily.

The protein resides in the cytoplasm. Its subcellular location is the cytoskeleton. Functionally, giardins are involved in parasite attachment to the intestinal mucosa and in the cytoskeletal disassembly and reassembly that marks the transition from infectious trophozoite to transmissible cyst. They may interact with other cytoskeletal proteins such as microtubules in the microribbons or crossbridges, to maintain the integrity of the ventral disk. The protein is Giardin subunit alpha-4 of Giardia intestinalis (Giardia lamblia).